Reading from the N-terminus, the 84-residue chain is Small ribosomal subunit protein uS17 (84 aa).

Belongs to the universal ribosomal protein uS17 family. In terms of assembly, part of the 30S ribosomal subunit.

Functionally, one of the primary rRNA binding proteins, it binds specifically to the 5'-end of 16S ribosomal RNA. The polypeptide is Small ribosomal subunit protein uS17 (Yersinia enterocolitica serotype O:8 / biotype 1B (strain NCTC 13174 / 8081)).